The following is a 183-amino-acid chain: Large ribosomal subunit protein bL25 (183 aa).

Belongs to the bacterial ribosomal protein bL25 family. CTC subfamily. As to quaternary structure, part of the 50S ribosomal subunit; part of the 5S rRNA/L5/L18/L25 subcomplex. Contacts the 5S rRNA. Binds to the 5S rRNA independently of L5 and L18.

In terms of biological role, this is one of the proteins that binds to the 5S RNA in the ribosome where it forms part of the central protuberance. The sequence is that of Large ribosomal subunit protein bL25 from Desulfotalea psychrophila (strain LSv54 / DSM 12343).